Consider the following 238-residue polypeptide: RNA-binding protein pno1 (238 aa).

One can recognise a KH domain in the interval Q162–I211.

The protein belongs to the PNO1 family.

The protein localises to the nucleus. Its subcellular location is the nucleolus. This chain is RNA-binding protein pno1 (l(1)G0004), found in Drosophila pseudoobscura pseudoobscura (Fruit fly).